A 459-amino-acid polypeptide reads, in one-letter code: Putative flavin-containing monooxygenase 2 (459 aa).

Residues 17–21 (GAGVS), E38, and 46–47 (VW) contribute to the FAD site. Residue 217–220 (SAID) participates in NADP(+) binding.

It belongs to the FMO family. FAD is required as a cofactor.

The polypeptide is Putative flavin-containing monooxygenase 2 (FMO2) (Arabidopsis thaliana (Mouse-ear cress)).